Consider the following 245-residue polypeptide: 3-deoxy-manno-octulosonate cytidylyltransferase (245 aa).

Belongs to the KdsB family.

Its subcellular location is the cytoplasm. It carries out the reaction 3-deoxy-alpha-D-manno-oct-2-ulosonate + CTP = CMP-3-deoxy-beta-D-manno-octulosonate + diphosphate. It functions in the pathway nucleotide-sugar biosynthesis; CMP-3-deoxy-D-manno-octulosonate biosynthesis; CMP-3-deoxy-D-manno-octulosonate from 3-deoxy-D-manno-octulosonate and CTP: step 1/1. Its pathway is bacterial outer membrane biogenesis; lipopolysaccharide biosynthesis. Functionally, activates KDO (a required 8-carbon sugar) for incorporation into bacterial lipopolysaccharide in Gram-negative bacteria. In Elusimicrobium minutum (strain Pei191), this protein is 3-deoxy-manno-octulosonate cytidylyltransferase.